Here is a 227-residue protein sequence, read N- to C-terminus: Cytochrome c oxidase subunit 2 (227 aa).

Residues 1-14 (MAHAAQVGLQDATS) lie on the Mitochondrial intermembrane side of the membrane. A helical membrane pass occupies residues 15 to 45 (PIMEELVIFHDHALMIIFLICFLVLYALFLT). The Mitochondrial matrix segment spans residues 46 to 59 (LTTKLTNTSISDAQ). A helical membrane pass occupies residues 60-87 (EMETIWTILPAIILILIALPSLRILYLT). Residues 88–227 (DEINDPSFTI…IFEMGPVFTL (140 aa)) are Mitochondrial intermembrane-facing. Histidine 161, cysteine 196, glutamate 198, cysteine 200, histidine 204, and methionine 207 together coordinate Cu cation. A Mg(2+)-binding site is contributed by glutamate 198.

The protein belongs to the cytochrome c oxidase subunit 2 family. Component of the cytochrome c oxidase (complex IV, CIV), a multisubunit enzyme composed of 14 subunits. The complex is composed of a catalytic core of 3 subunits MT-CO1, MT-CO2 and MT-CO3, encoded in the mitochondrial DNA, and 11 supernumerary subunits COX4I, COX5A, COX5B, COX6A, COX6B, COX6C, COX7A, COX7B, COX7C, COX8 and NDUFA4, which are encoded in the nuclear genome. The complex exists as a monomer or a dimer and forms supercomplexes (SCs) in the inner mitochondrial membrane with NADH-ubiquinone oxidoreductase (complex I, CI) and ubiquinol-cytochrome c oxidoreductase (cytochrome b-c1 complex, complex III, CIII), resulting in different assemblies (supercomplex SCI(1)III(2)IV(1) and megacomplex MCI(2)III(2)IV(2)). Found in a complex with TMEM177, COA6, COX18, COX20, SCO1 and SCO2. Interacts with TMEM177 in a COX20-dependent manner. Interacts with COX20. Interacts with COX16. Cu cation serves as cofactor.

The protein localises to the mitochondrion inner membrane. It catalyses the reaction 4 Fe(II)-[cytochrome c] + O2 + 8 H(+)(in) = 4 Fe(III)-[cytochrome c] + 2 H2O + 4 H(+)(out). Component of the cytochrome c oxidase, the last enzyme in the mitochondrial electron transport chain which drives oxidative phosphorylation. The respiratory chain contains 3 multisubunit complexes succinate dehydrogenase (complex II, CII), ubiquinol-cytochrome c oxidoreductase (cytochrome b-c1 complex, complex III, CIII) and cytochrome c oxidase (complex IV, CIV), that cooperate to transfer electrons derived from NADH and succinate to molecular oxygen, creating an electrochemical gradient over the inner membrane that drives transmembrane transport and the ATP synthase. Cytochrome c oxidase is the component of the respiratory chain that catalyzes the reduction of oxygen to water. Electrons originating from reduced cytochrome c in the intermembrane space (IMS) are transferred via the dinuclear copper A center (CU(A)) of subunit 2 and heme A of subunit 1 to the active site in subunit 1, a binuclear center (BNC) formed by heme A3 and copper B (CU(B)). The BNC reduces molecular oxygen to 2 water molecules using 4 electrons from cytochrome c in the IMS and 4 protons from the mitochondrial matrix. This Pongo abelii (Sumatran orangutan) protein is Cytochrome c oxidase subunit 2 (MT-CO2).